Here is a 95-residue protein sequence, read N- to C-terminus: Scorpine-like peptide Smp76 (95 aa).

An N-terminal signal peptide occupies residues 1 to 19 (MNCKLTALLFLGLIVIASC). The BetaSPN-type CS-alpha/beta domain occupies 55–95 (EFQCVANVDTLGNCKKHCAKTTGEKGYCHGTKCKCGIELSY). 3 disulfides stabilise this stretch: Cys-58–Cys-82, Cys-68–Cys-87, and Cys-72–Cys-89.

Disulfide bonds are critical for antiviral function, and their disruption inhibit viral activity. Expressed by the venom gland.

It is found in the secreted. In terms of biological role, antibacterial peptide. Dose-dependently inhibits Dengue virus (DENV), Zika virus (ZIKV) and Hepatitis C virus (HCV) infections. Two mechanisms of action have been described by two different groups: one involving activity on extracellular particles, and the other regulating the immune system. On Dengue virus (DENV), Zika virus (ZIKV), suppress the established viral infection, similar to the effect of interferon (IFN)-beta. Mechanistically, upregulates the expression of IFN-beta by activating interferon regulatory transcription factor 3 (IRF3) phosphorylation. On HCV and DENV, acts by inactivating extra-cellular infectious particles without affecting viral replication. Shows very weak inhibition on measles virus. Is neither toxic nor hemolytic in vitro at high concentrations. This is Scorpine-like peptide Smp76 from Scorpio palmatus (Israeli golden scorpion).